Consider the following 203-residue polypeptide: B-cell CLL/lymphoma 7 protein family member B-A (203 aa).

Disordered regions lie at residues 55-80 (KEKE…ESSD) and 94-148 (SNQS…EIME). A compositionally biased stretch (low complexity) spans 109–129 (ADSSNNSSPPASEPVSPAPQS).

This sequence belongs to the BCL7 family.

The polypeptide is B-cell CLL/lymphoma 7 protein family member B-A (bcl7ba) (Danio rerio (Zebrafish)).